Reading from the N-terminus, the 194-residue chain is MMEQPSTNLTADVLIDEEAEPDLSIWFGCLETARTELAQAAIAAAAVEGCDRGSVGVRICDDATIHPINREFLQHDYPTDVISFPYELEPPMVEGELVASFETAIENASEPSNPLSPREELLLYVVHGTLHIVGHDDQSPEPRAAMRRAEIAAMKLIGIELPLSNDEDSAPEQDDSFDDDASDSSGGIMSGGVS.

Residues His-127, His-131, and Asp-137 each contribute to the Zn(2+) site. A disordered region spans residues 162 to 194 (PLSNDEDSAPEQDDSFDDDASDSSGGIMSGGVS). A compositionally biased stretch (acidic residues) spans 165–182 (NDEDSAPEQDDSFDDDAS).

It belongs to the endoribonuclease YbeY family. Requires Zn(2+) as cofactor.

It localises to the cytoplasm. In terms of biological role, single strand-specific metallo-endoribonuclease involved in late-stage 70S ribosome quality control and in maturation of the 3' terminus of the 16S rRNA. The chain is Endoribonuclease YbeY from Rhodopirellula baltica (strain DSM 10527 / NCIMB 13988 / SH1).